A 373-amino-acid polypeptide reads, in one-letter code: Deoxyguanosinetriphosphate triphosphohydrolase-like protein 1 (373 aa).

Residues 21 to 43 (RSSEARRAVPEAPSETRTAYQKD) form a disordered region. The HD domain occupies 76–198 (RLTHTLEVQQ…VDAADALAYT (123 aa)).

The protein belongs to the dGTPase family. Type 2 subfamily.

The chain is Deoxyguanosinetriphosphate triphosphohydrolase-like protein 1 from Deinococcus radiodurans (strain ATCC 13939 / DSM 20539 / JCM 16871 / CCUG 27074 / LMG 4051 / NBRC 15346 / NCIMB 9279 / VKM B-1422 / R1).